Consider the following 309-residue polypeptide: uncharacterized protein (309 aa).

Residues 23 to 39 (RFNVAIIGGTGGLGRAI) form a helical membrane-spanning segment.

It belongs to the NmrA-type oxidoreductase family.

The protein localises to the membrane. This is an uncharacterized protein from Saccharomyces cerevisiae (strain ATCC 204508 / S288c) (Baker's yeast).